The sequence spans 354 residues: S-adenosylmethionine:tRNA ribosyltransferase-isomerase (354 aa).

The protein belongs to the QueA family. As to quaternary structure, monomer.

Its subcellular location is the cytoplasm. The enzyme catalyses 7-aminomethyl-7-carbaguanosine(34) in tRNA + S-adenosyl-L-methionine = epoxyqueuosine(34) in tRNA + adenine + L-methionine + 2 H(+). Its pathway is tRNA modification; tRNA-queuosine biosynthesis. Its function is as follows. Transfers and isomerizes the ribose moiety from AdoMet to the 7-aminomethyl group of 7-deazaguanine (preQ1-tRNA) to give epoxyqueuosine (oQ-tRNA). The sequence is that of S-adenosylmethionine:tRNA ribosyltransferase-isomerase from Methylobacterium radiotolerans (strain ATCC 27329 / DSM 1819 / JCM 2831 / NBRC 15690 / NCIMB 10815 / 0-1).